Consider the following 123-residue polypeptide: Molluscan insulin-related peptide 1 (123 aa).

The first 31 residues, 1 to 31, serve as a signal peptide directing secretion; sequence MAGVRLVFTKAFMVTVLLTLLLNIGVKPAEG. The residue at position 32 (Gln-32) is a Pyrrolidone carboxylic acid. 3 cysteine pairs are disulfide-bonded: Cys-48-Cys-109, Cys-60-Cys-122, and Cys-108-Cys-113. A propeptide spanning residues 68–69 is cleaved from the precursor; it reads MV. A Pyrrolidone carboxylic acid modification is found at Gln-99.

The protein belongs to the insulin family. As to quaternary structure, heterodimer of a B chain and an A chain linked by two disulfide bonds. As to expression, expressed in the cerebral light-green cells which are giant neuroendocrines cells involved in the control of growth.

It is found in the cytoplasmic vesicle. Its subcellular location is the secretory vesicle. In Lymnaea stagnalis (Great pond snail), this protein is Molluscan insulin-related peptide 1.